The following is a 189-amino-acid chain: Putative zinc finger protein ORF189 (189 aa).

The C2H2-type zinc finger occupies tyrosine 114–histidine 137.

In Acidianus two-tailed virus (ATV), this protein is Putative zinc finger protein ORF189.